The primary structure comprises 44 residues: Hyaluronidase CdtHya1 (44 aa).

It belongs to the glycosyl hydrolase 56 family. As to quaternary structure, monomer. Post-translationally, contains disulfide bonds. Glycosylated. Expressed by the venom gland.

The protein localises to the secreted. The catalysed reaction is Random hydrolysis of (1-&gt;4)-linkages between N-acetyl-beta-D-glucosamine and D-glucuronate residues in hyaluronate.. In terms of biological role, snake venom endo-hyaluronidase that degrades hyaluronan to smaller oligosaccharide fragments. In venom, it is not toxic by itself, but increases the diffusion of other venom proteins such as crotoxin (a neurotoxic and myotoxic PLA2) by degrading the extracellular matrix. In addition, it displays antiedematogenic activity, since it significantly diminishes the oedematogenic activity of crotoxin (probably by direct substrate hydrolysis, since hyaluronan possesses strong water-binding capacity). This Crotalus durissus terrificus (South American rattlesnake) protein is Hyaluronidase CdtHya1.